The sequence spans 262 residues: Enoyl-[acyl-carrier-protein] reductase [NADH] FabI (262 aa).

Residues glycine 13, 19–20 (SI), glutamine 40, 64–65 (DV), and isoleucine 92 each bind NAD(+). Alanine 95 is a substrate binding site. Active-site proton acceptor residues include tyrosine 146 and tyrosine 156. NAD(+) is bound by residues lysine 163 and 192-196 (IRTLA).

This sequence belongs to the short-chain dehydrogenases/reductases (SDR) family. FabI subfamily. In terms of assembly, homotetramer.

It catalyses the reaction a 2,3-saturated acyl-[ACP] + NAD(+) = a (2E)-enoyl-[ACP] + NADH + H(+). It carries out the reaction (2E)-butenoyl-[ACP] + NADH + H(+) = butanoyl-[ACP] + NAD(+). The catalysed reaction is (2E)-decenoyl-[ACP] + NADH + H(+) = decanoyl-[ACP] + NAD(+). The enzyme catalyses (2E)-hexadecenoyl-[ACP] + NADH + H(+) = hexadecanoyl-[ACP] + NAD(+). It catalyses the reaction (2E,9Z)-hexadecadienoyl-[ACP] + NADH + H(+) = (9Z)-hexadecenoyl-[ACP] + NAD(+). It carries out the reaction (2E)-5-methylhexenoyl-[ACP] + NADH + H(+) = 5-methylhexanoyl-[ACP] + NAD(+). The protein operates within lipid metabolism; fatty acid biosynthesis. It participates in cofactor biosynthesis; biotin biosynthesis. Inhibited by diazaborines, triclosan (5-chloro-2-2,4-dichlorophenoxyphenol), 1,4-disubstituted imidazoles, 1,4-benzodiazepine derivatives, naphthyridinone derivatives, luteolin and curcumin. The antibiotic diazaborine interferes with the activity by binding to the protein and NAD. Its function is as follows. Catalyzes the reduction of a carbon-carbon double bond in an enoyl moiety that is covalently linked to an acyl carrier protein (ACP). Involved in the elongation cycle of fatty acid which are used in the lipid metabolism and in the biotin biosynthesis. The protein is Enoyl-[acyl-carrier-protein] reductase [NADH] FabI (fabI) of Escherichia coli (strain K12).